We begin with the raw amino-acid sequence, 73 residues long: Alpha-bungarotoxin N3 (73 aa).

Intrachain disulfides connect Cys-3/Cys-23, Cys-16/Cys-43, Cys-28/Cys-32, Cys-47/Cys-58, and Cys-59/Cys-64.

It belongs to the three-finger toxin family. Long-chain subfamily. Type II alpha-neurotoxin sub-subfamily. As to quaternary structure, monomer in solution, homodimer in crystal state. As to expression, expressed by the venom gland.

It is found in the secreted. Its function is as follows. Binds with high affinity to muscular (alpha-1/CHRNA1) and neuronal (alpha-7/CHRNA7) nicotinic acetylcholine receptor (nAChR) and inhibits acetylcholine from binding to the receptor, thereby impairing neuromuscular and neuronal transmission. Mice injected with this toxin develop flaccid paralysis followed by death. Irreversibly inhibits twitches in a concentration-dependent manner in rat phrenic nerve-hemidiaphragm and chick biventer cervicis muscle. This chain is Alpha-bungarotoxin N3, found in Bungarus candidus (Malayan krait).